Consider the following 285-residue polypeptide: Troponin T, cardiac muscle (285 aa).

Positions 1–58 (MSDVEEAVEEYEEQEEAAEEEHEEAVEEEAGGEAEAGEPCTAEDGEEEEGREAEDGPV) are enriched in acidic residues. 2 disordered regions span residues 1 to 83 (MSDV…GERV) and 111 to 206 (RKKE…EKKK). Ser2 carries the N-acetylserine modification. The residue at position 2 (Ser2) is a Phosphoserine; by CK2. A compositionally biased stretch (pro residues) spans 66-77 (RPFMPNLVPPKI). Basic and acidic residues-rich tracts occupy residues 111-171 (RKKE…DEAR) and 190-206 (QTERKSGKRQTEREKKK). Phosphothreonine; by PKC/PRKCA is present on Thr191. Phosphoserine; by PKC/PRKCA is present on Ser195. Thr200 is modified (phosphothreonine; by PKC/PRKCA and RAF1). Phosphothreonine; by PKC/PRKCA is present on Thr281.

Belongs to the troponin T family. Post-translationally, the N-terminus is blocked. Phosphorylation at Thr-200 by PRKCA induces significant reduction in myofilament calcium sensitivity and actomyosin ATPase activity.

In terms of biological role, troponin T is the tropomyosin-binding subunit of troponin, the thin filament regulatory complex which confers calcium-sensitivity to striated muscle actomyosin ATPase activity. The chain is Troponin T, cardiac muscle (TNNT2) from Bos taurus (Bovine).